We begin with the raw amino-acid sequence, 269 residues long: Hydroxyethylthiazole kinase (269 aa).

Methionine 46 contributes to the substrate binding site. Residues arginine 122 and threonine 168 each contribute to the ATP site. Residue glycine 195 participates in substrate binding.

The protein belongs to the Thz kinase family. Mg(2+) serves as cofactor.

The catalysed reaction is 5-(2-hydroxyethyl)-4-methylthiazole + ATP = 4-methyl-5-(2-phosphooxyethyl)-thiazole + ADP + H(+). Its pathway is cofactor biosynthesis; thiamine diphosphate biosynthesis; 4-methyl-5-(2-phosphoethyl)-thiazole from 5-(2-hydroxyethyl)-4-methylthiazole: step 1/1. Catalyzes the phosphorylation of the hydroxyl group of 4-methyl-5-beta-hydroxyethylthiazole (THZ). This Geobacillus kaustophilus (strain HTA426) protein is Hydroxyethylthiazole kinase.